We begin with the raw amino-acid sequence, 331 residues long: 5'-AMP-activated protein kinase subunit gamma-1 (331 aa).

Residues 1-12 (METVISSDSSPA) are compositionally biased toward polar residues. The tract at residues 1–26 (METVISSDSSPAVENEHPQETPESNN) is disordered. CBS domains follow at residues 43 to 103 (PTSS…KSAL), 125 to 187 (SFKP…PKPE), and 198 to 260 (IGTY…NLDV). Residues arginine 70, 85 to 90 (MLTITD), valine 130, 151 to 152 (HR), and lysine 170 contribute to the ADP site. AMP-binding positions include arginine 70, 85–90 (MLTITD), valine 130, histidine 151, 151–152 (HR), lysine 170, threonine 200, alanine 205, 226–227 (SA), and 242–245 (SKFD). Residues arginine 70, 85–90 (MLTITD), valine 130, 151–152 (HR), arginine 152, and lysine 170 contribute to the ATP site. An AMPK pseudosubstrate motif is present at residues 138–159 (LFDAVSSLIRNKIHRLPVIDPE). 242-245 (SKFD) provides a ligand contact to ADP. 242–245 (SKFD) contacts ATP. Serine 261 carries the phosphoserine; by ULK1 modification. Threonine 263 bears the Phosphothreonine; by ULK1 mark. Arginine 269 serves as a coordination point for ADP. Arginine 269 serves as a coordination point for AMP. Residue arginine 269 coordinates ATP. Residue serine 270 is modified to Phosphoserine; by ULK1. In terms of domain architecture, CBS 4 spans 272–329 (YFEGVLKCYLHETLETIINRLVEAEVHRLVVVDENDVVKGIVSLSDILQALVLTGGEK). ADP is bound by residues leucine 277 and 298–299 (HR). AMP contacts are provided by residues leucine 277, histidine 298, 298 to 299 (HR), and 314 to 317 (SLSD). ATP-binding positions include leucine 277 and 298 to 299 (HR).

It belongs to the 5'-AMP-activated protein kinase gamma subunit family. AMPK is a heterotrimer of an alpha catalytic subunit (PRKAA1 or PRKAA2), a beta (PRKAB1 or PRKAB2) and a gamma non-catalytic subunits (PRKAG1, PRKAG2 or PRKAG3). Interacts with FNIP1 and FNIP2. Phosphorylated by ULK1 and ULK2; leading to negatively regulate AMPK activity and suggesting the existence of a regulatory feedback loop between ULK1, ULK2 and AMPK. In terms of processing, glycosylated; O-GlcNAcylated by OGT, promoting the AMP-activated protein kinase (AMPK) activity.

AMP/ATP-binding subunit of AMP-activated protein kinase (AMPK), an energy sensor protein kinase that plays a key role in regulating cellular energy metabolism. In response to reduction of intracellular ATP levels, AMPK activates energy-producing pathways and inhibits energy-consuming processes: inhibits protein, carbohydrate and lipid biosynthesis, as well as cell growth and proliferation. AMPK acts via direct phosphorylation of metabolic enzymes, and by longer-term effects via phosphorylation of transcription regulators. Also acts as a regulator of cellular polarity by remodeling the actin cytoskeleton; probably by indirectly activating myosin. Gamma non-catalytic subunit mediates binding to AMP, ADP and ATP, leading to activate or inhibit AMPK: AMP-binding results in allosteric activation of alpha catalytic subunit (PRKAA1 or PRKAA2) both by inducing phosphorylation and preventing dephosphorylation of catalytic subunits. ADP also stimulates phosphorylation, without stimulating already phosphorylated catalytic subunit. ATP promotes dephosphorylation of catalytic subunit, rendering the AMPK enzyme inactive. The chain is 5'-AMP-activated protein kinase subunit gamma-1 (PRKAG1) from Homo sapiens (Human).